The chain runs to 313 residues: MMENFKHTTVLLDEAVNGLNIRPDGIYIDGTFGRGGHSRLILSQLGEEGRLLAIDRDPQAIAVAQAISDPRFSIIHGPFSALADYVAERELTGKIDGILLDLGVSSPQLDDAERGFSFMRDGPLDMRMDPTRGQSAAEWLQTAEEADIAWVLKTFGEERFAKRIARAIVERNREQPMTRTKELAEVVAAATPVKDKFKHPATRTFQAVRIWVNSELEEIEQALKSSLSVLAPGGRLSIISFHSLEDRIVKRFMREQSRGPQVPAGLPMTEAQLKKLGGRELRALGKLMPGEKEVAENPRARSSVLRIAERTNA.

Residues 35 to 37 (GGH), aspartate 55, phenylalanine 79, aspartate 101, and glutamine 108 contribute to the S-adenosyl-L-methionine site.

This sequence belongs to the methyltransferase superfamily. RsmH family.

The protein resides in the cytoplasm. The enzyme catalyses cytidine(1402) in 16S rRNA + S-adenosyl-L-methionine = N(4)-methylcytidine(1402) in 16S rRNA + S-adenosyl-L-homocysteine + H(+). Specifically methylates the N4 position of cytidine in position 1402 (C1402) of 16S rRNA. In Salmonella paratyphi A (strain ATCC 9150 / SARB42), this protein is Ribosomal RNA small subunit methyltransferase H.